Consider the following 418-residue polypeptide: tRNA-2-methylthio-N(6)-dimethylallyladenosine synthase (418 aa).

An MTTase N-terminal domain is found at 1–118; that stretch reads MNYLIETIGC…ALKIMNLFRT (118 aa). [4Fe-4S] cluster-binding residues include Cys-10, Cys-46, Cys-80, Cys-143, Cys-147, and Cys-150. The region spanning 129–356 is the Radical SAM core domain; it reads IKSKIVRYIT…LKESNKISIE (228 aa). The TRAM domain occupies 359–418; sequence SEMLGSTQQVLAEEIKNGIIKARTKNGRKVFAEGRKEYIGKHINVNIKEAKINSLFGDIV.

It belongs to the methylthiotransferase family. MiaB subfamily. In terms of assembly, monomer. [4Fe-4S] cluster is required as a cofactor.

The protein localises to the cytoplasm. It carries out the reaction N(6)-dimethylallyladenosine(37) in tRNA + (sulfur carrier)-SH + AH2 + 2 S-adenosyl-L-methionine = 2-methylsulfanyl-N(6)-dimethylallyladenosine(37) in tRNA + (sulfur carrier)-H + 5'-deoxyadenosine + L-methionine + A + S-adenosyl-L-homocysteine + 2 H(+). Catalyzes the methylthiolation of N6-(dimethylallyl)adenosine (i(6)A), leading to the formation of 2-methylthio-N6-(dimethylallyl)adenosine (ms(2)i(6)A) at position 37 in tRNAs that read codons beginning with uridine. The sequence is that of tRNA-2-methylthio-N(6)-dimethylallyladenosine synthase from Endomicrobium trichonymphae.